We begin with the raw amino-acid sequence, 958 residues long: MAHHDSVLVISSSPDFPSICDLLPKATRQPSLRSGSNAAPVSNDAPAAFTSAANIWQSSRARHLEGAEISNIGPSQSATTAADLATVPAESPIKSGVEGPTLPLGGDKKKPRTAGARKKKGKTETIEPPLALDMAVADGPVAVAPPKKSGRKPRAKKDATLAQTTLPKGKVTKTAAREITKAQKKAETVSRHFTPHTSAPPELVAGPIDDSPSVFEPAMARRMDWTPPRESASVHCLADSSMEKEVSSSALSLQDHVFKNLQDTYGRTMEASGYIGAALPLTSMDVLGKRKLVEMVSCVGHRQEIPQASPTKPKVVKKKPRTITELATAAYRRPEEAERSTLSRQQDTHIPSGNLELPSEQLTAASKSASAKPKAAKKAPKPRATKKKQSPPEPILLSPTSAMRQVSNQDFVFGTASQLATEDDPVLLRALHEAMKVSNQADSDPFATPSPGNSNLAIRRRSGAGLWAAGARYGDGDLLDAEVLDLTRSSPLTLAQFAQNPPPPCPEAVLADKPPVESAYIEIEMSDDTLDLTISPPVGSPKTLPPCPPRPGGQAVRHKDSNLAVSGRPQTPPQEADFDPPPSNQEQHQLLLSQSNTPQQPQPAPPPPPSFELYTDARLAKEVASYGFKVVKKRTAMIALLNRCWESRNKTALGSTAAQAAMSTSAPNQAASPSRPRGRPRKDSLTATTEVVQAPSPAKKGRKKAGVVSGAGSEVPQPEKWPRGRPRKDSAASVSSITAPAATNPRRRSAAISDVDSDEPQVEKRSRGRPKKDATTSPATRATRAKAPPSPKRAKSPCTTQPAPTTPRRRKAPAKQIFEIPDSGSDDPFASSAPSSPDQHSDLFSSPPAVDLSVTEDTEASLIASPTTQDVSLFGYITRAVASAPPTKDPANPSWHEKMLMYDPIILEDLTAWLNAGRLDQVGFDGEVAPGDVKKWCESKSVCCLWRVNLRGKERKRF.

6 disordered regions span residues 89–123 (AESPIKSGVEGPTLPLGGDKKKPRTAGARKKKGKT), 183–209 (QKKAETVSRHFTPHTSAPPELVAGPID), 326–400 (LATA…LSPT), 531–589 (DLTI…EQHQ), 594–613 (QSNTPQQPQPAPPPPPSFEL), and 655–849 (STAA…SPPA). The segment covering 109-121 (KKPRTAGARKKKG) has biased composition (basic residues). The span at 332–341 (RRPEEAERST) shows a compositional bias: basic and acidic residues. Positions 342-351 (LSRQQDTHIP) are enriched in polar residues. The segment covering 364–373 (AASKSASAKP) has biased composition (low complexity). The span at 374 to 389 (KAAKKAPKPRATKKKQ) shows a compositional bias: basic residues. A compositionally biased stretch (pro residues) spans 600 to 610 (QPQPAPPPPPS). Low complexity-rich tracts occupy residues 655 to 666 (STAAQAAMSTSA), 775 to 787 (TTSPATRATRAKA), and 821 to 838 (PDSGSDDPFASSAPSSPD).

The protein belongs to the SLX4 family. In terms of assembly, forms a heterodimer with SLX1. Post-translationally, phosphorylated in response to DNA damage.

It is found in the nucleus. Functionally, regulatory subunit of the SLX1-SLX4 structure-specific endonuclease that resolves DNA secondary structures generated during DNA repair and recombination. Has endonuclease activity towards branched DNA substrates, introducing single-strand cuts in duplex DNA close to junctions with ss-DNA. This Chaetomium globosum (strain ATCC 6205 / CBS 148.51 / DSM 1962 / NBRC 6347 / NRRL 1970) (Soil fungus) protein is Structure-specific endonuclease subunit SLX4.